Consider the following 155-residue polypeptide: Interferon gamma (155 aa).

The signal sequence occupies residues 1 to 22 (MNATHCILALQLFLMAVSGCYC). N-linked (GlcNAc...) asparagine glycans are attached at residues asparagine 38 and asparagine 90.

The protein belongs to the type II (or gamma) interferon family. Homodimer. Interacts with IFNGR1 (via extracellular domain); this interaction promotes IFNGR1 dimerization. As to expression, released primarily from activated T lymphocytes.

It localises to the secreted. Type II interferon produced by immune cells such as T-cells and NK cells that plays crucial roles in antimicrobial, antiviral, and antitumor responses by activating effector immune cells and enhancing antigen presentation. Primarily signals through the JAK-STAT pathway after interaction with its receptor IFNGR1 to affect gene regulation. Upon IFNG binding, IFNGR1 intracellular domain opens out to allow association of downstream signaling components JAK2, JAK1 and STAT1, leading to STAT1 activation, nuclear translocation and transcription of IFNG-regulated genes. Many of the induced genes are transcription factors such as IRF1 that are able to further drive regulation of a next wave of transcription. Plays a role in class I antigen presentation pathway by inducing a replacement of catalytic proteasome subunits with immunoproteasome subunits. In turn, increases the quantity, quality, and repertoire of peptides for class I MHC loading. Increases the efficiency of peptide generation also by inducing the expression of activator PA28 that associates with the proteasome and alters its proteolytic cleavage preference. Up-regulates as well MHC II complexes on the cell surface by promoting expression of several key molecules such as cathepsins B/CTSB, H/CTSH, and L/CTSL. Participates in the regulation of hematopoietic stem cells during development and under homeostatic conditions by affecting their development, quiescence, and differentiation. This is Interferon gamma (Ifng) from Mus musculus (Mouse).